We begin with the raw amino-acid sequence, 1194 residues long: Chitin synthase C (1194 aa).

2 disordered regions span residues 1-91 (MSLP…PNYL) and 136-177 (GAHG…RRKA). Residues 12–23 (PRREETSAFREP) are compositionally biased toward basic and acidic residues. A compositionally biased stretch (basic residues) spans 42–54 (PRHHRHHRSHSSR). Composition is skewed to basic and acidic residues over residues 55–69 (HQHDIDEERAEEGGI) and 76–85 (VKPERGRMDP). A compositionally biased stretch (basic residues) spans 150-164 (TRHRSKKRKGSRKIS). A helical transmembrane segment spans residues 221 to 241 (IGLISIILMIAAFVGFLTFGF). Residues Asn-351 and Asn-390 are each glycosylated (N-linked (GlcNAc...) asparagine). A helical membrane pass occupies residues 476 to 496 (YVSLIFILSIVIVKFAFALLF). 4 N-linked (GlcNAc...) asparagine glycosylation sites follow: Asn-582, Asn-608, Asn-885, and Asn-1014. 3 helical membrane-spanning segments follow: residues 1039–1059 (FVIFVELVGTVVLPAAISFTI), 1073–1093 (IIPLVLLALILGLPGVLVVVT), and 1097–1117 (LVYVLWMLVYLISLPIWNFVL).

Belongs to the chitin synthase family. Class V subfamily.

The protein localises to the cell membrane. It catalyses the reaction [(1-&gt;4)-N-acetyl-beta-D-glucosaminyl](n) + UDP-N-acetyl-alpha-D-glucosamine = [(1-&gt;4)-N-acetyl-beta-D-glucosaminyl](n+1) + UDP + H(+). Functionally, polymerizes chitin, a structural polymer of the cell wall and septum, by transferring the sugar moiety of UDP-GlcNAc to the non-reducing end of the growing chitin polymer. Responsible for synthesis of 30-40% of the chitin in the cells. ChsA and chsD play redundant functions in conidia formation. The chitin synthesized by the chsD-encoded isozyme contributes to the rigidity of the walls of germinating conidia, of the subapical region of hyphae, and of conidiophore vesicles, but is not necessary for normal morphology of these cells. The polypeptide is Chitin synthase C (Emericella nidulans (strain FGSC A4 / ATCC 38163 / CBS 112.46 / NRRL 194 / M139) (Aspergillus nidulans)).